Reading from the N-terminus, the 144-residue chain is 3-hydroxyacyl-[acyl-carrier-protein] dehydratase FabZ (144 aa).

His51 is an active-site residue.

It belongs to the thioester dehydratase family. FabZ subfamily.

The protein localises to the cytoplasm. It catalyses the reaction a (3R)-hydroxyacyl-[ACP] = a (2E)-enoyl-[ACP] + H2O. In terms of biological role, involved in unsaturated fatty acids biosynthesis. Catalyzes the dehydration of short chain beta-hydroxyacyl-ACPs and long chain saturated and unsaturated beta-hydroxyacyl-ACPs. The polypeptide is 3-hydroxyacyl-[acyl-carrier-protein] dehydratase FabZ (Lactococcus lactis subsp. cremoris (strain SK11)).